The sequence spans 317 residues: Ribosomal RNA small subunit methyltransferase H (317 aa).

S-adenosyl-L-methionine is bound by residues 34–36, Asp53, Phe80, Asp98, and Gln105; that span reads GGH.

Belongs to the methyltransferase superfamily. RsmH family.

The protein resides in the cytoplasm. The enzyme catalyses cytidine(1402) in 16S rRNA + S-adenosyl-L-methionine = N(4)-methylcytidine(1402) in 16S rRNA + S-adenosyl-L-homocysteine + H(+). Specifically methylates the N4 position of cytidine in position 1402 (C1402) of 16S rRNA. This chain is Ribosomal RNA small subunit methyltransferase H, found in Tropheryma whipplei (strain TW08/27) (Whipple's bacillus).